The sequence spans 671 residues: Condensin complex subunit 2 (671 aa).

The segment covering 1–24 (MDESLTPNPKQKPASTTTRIQAPT) has biased composition (polar residues). Disordered regions lie at residues 1–33 (MDES…GSND), 404–444 (NSWA…KQAE), and 510–564 (RRKN…ISQP). Residues 406–415 (WAGPDHWKYR) carry the Kleisin-gamma middle domain (GM domain) involved in chromosome-binding motif. The span at 536–556 (VYDDDDGPFDDNENDQSDAED) shows a compositional bias: acidic residues.

Belongs to the CND2 (condensin subunit 2) family. As to quaternary structure, component of the condensin complex. Mostly expressed in flower buds and flowers, and, to a lower extent, in roots, stems, leaves and seedlings.

The protein resides in the cytoplasm. Its subcellular location is the chromosome. Functionally, regulatory subunit of the condensin complex, a complex required for conversion of interphase chromatin into mitotic-like condense chromosomes. The condensin complex probably introduces positive supercoils into relaxed DNA in the presence of type I topoisomerases and converts nicked DNA into positive knotted forms in the presence of type II topoisomerases. Essential protein. This chain is Condensin complex subunit 2 (CAPH), found in Arabidopsis thaliana (Mouse-ear cress).